Reading from the N-terminus, the 565-residue chain is Oxygen-dependent choline dehydrogenase (565 aa).

Position 6-35 (6-35 (DYIIVGAGSAGNTLATRLTEDAGVTVLLLE)) interacts with FAD. Histidine 475 serves as the catalytic Proton acceptor.

This sequence belongs to the GMC oxidoreductase family. Requires FAD as cofactor.

It catalyses the reaction choline + A = betaine aldehyde + AH2. The catalysed reaction is betaine aldehyde + NAD(+) + H2O = glycine betaine + NADH + 2 H(+). The protein operates within amine and polyamine biosynthesis; betaine biosynthesis via choline pathway; betaine aldehyde from choline (cytochrome c reductase route): step 1/1. Functionally, involved in the biosynthesis of the osmoprotectant glycine betaine. Catalyzes the oxidation of choline to betaine aldehyde and betaine aldehyde to glycine betaine at the same rate. The sequence is that of Oxygen-dependent choline dehydrogenase from Pseudomonas putida (strain ATCC 700007 / DSM 6899 / JCM 31910 / BCRC 17059 / LMG 24140 / F1).